Consider the following 63-residue polypeptide: Adipokinetic prohormone type 1 (63 aa).

The first 22 residues, 1 to 22 (MVQRCLVVALLVVVVAAALCSA), serve as a signal peptide directing secretion. The residue at position 23 (glutamine 23) is a Pyrrolidone carboxylic acid. Threonine 32 is modified (threonine amide).

It belongs to the AKH/HRTH/RPCH family. Adipokinetic hormone precursor-related peptide (APRP) can form three type of disulfide-bond dimers: p1 (alpha-alpha), p2 (alpha-beta), and p3 (beta-beta).

The protein resides in the secreted. Functionally, this hormone, released from cells in the corpora cardiaca, causes release of diglycerides from the fat body and stimulation of muscles to use these diglycerides as an energy source during energy-demanding processes. This is Adipokinetic prohormone type 1 from Schistocerca nitens (Vagrant locust).